Reading from the N-terminus, the 192-residue chain is dITP/XTP pyrophosphatase (192 aa).

Thr12–Lys17 contacts substrate. Positions 41 and 70 each coordinate Mg(2+). Asp70 functions as the Proton acceptor in the catalytic mechanism. Substrate is bound by residues Ser71, Phe145 to Asp148, Lys168, and His173 to Arg174.

Belongs to the HAM1 NTPase family. As to quaternary structure, homodimer. Mg(2+) is required as a cofactor.

The catalysed reaction is XTP + H2O = XMP + diphosphate + H(+). It carries out the reaction dITP + H2O = dIMP + diphosphate + H(+). It catalyses the reaction ITP + H2O = IMP + diphosphate + H(+). In terms of biological role, pyrophosphatase that catalyzes the hydrolysis of nucleoside triphosphates to their monophosphate derivatives, with a high preference for the non-canonical purine nucleotides XTP (xanthosine triphosphate), dITP (deoxyinosine triphosphate) and ITP. Seems to function as a house-cleaning enzyme that removes non-canonical purine nucleotides from the nucleotide pool, thus preventing their incorporation into DNA/RNA and avoiding chromosomal lesions. This chain is dITP/XTP pyrophosphatase, found in Saccharolobus solfataricus (strain ATCC 35092 / DSM 1617 / JCM 11322 / P2) (Sulfolobus solfataricus).